A 499-amino-acid chain; its full sequence is Glycerol kinase (499 aa).

ADP is bound at residue Thr-13. ATP-binding residues include Thr-13, Thr-14, and Ser-15. Thr-13 lines the sn-glycerol 3-phosphate pocket. An ADP-binding site is contributed by Arg-17. Sn-glycerol 3-phosphate contacts are provided by Arg-83, Glu-84, Tyr-135, and Asp-245. The glycerol site is built by Arg-83, Glu-84, Tyr-135, Asp-245, and Gln-246. Residues Thr-267 and Gly-310 each contribute to the ADP site. Thr-267, Gly-310, Gln-314, and Gly-411 together coordinate ATP. ADP is bound by residues Gly-411 and Asn-415.

The protein belongs to the FGGY kinase family.

The enzyme catalyses glycerol + ATP = sn-glycerol 3-phosphate + ADP + H(+). The protein operates within polyol metabolism; glycerol degradation via glycerol kinase pathway; sn-glycerol 3-phosphate from glycerol: step 1/1. Its activity is regulated as follows. Inhibited by fructose 1,6-bisphosphate (FBP). In terms of biological role, key enzyme in the regulation of glycerol uptake and metabolism. Catalyzes the phosphorylation of glycerol to yield sn-glycerol 3-phosphate. The polypeptide is Glycerol kinase (Stenotrophomonas maltophilia (strain K279a)).